We begin with the raw amino-acid sequence, 185 residues long: Ribosome-recycling factor (185 aa).

This sequence belongs to the RRF family.

The protein localises to the cytoplasm. Functionally, responsible for the release of ribosomes from messenger RNA at the termination of protein biosynthesis. May increase the efficiency of translation by recycling ribosomes from one round of translation to another. The sequence is that of Ribosome-recycling factor from Thermotoga petrophila (strain ATCC BAA-488 / DSM 13995 / JCM 10881 / RKU-1).